Reading from the N-terminus, the 630-residue chain is Phosphatidylinositol 4-kinase gamma 5 (630 aa).

The 58-residue stretch at 41 to 98 (RRVFVQTETGCVLGLELDRSDNAHTVKRKLQVALNFPIEESSLTFGDLVLKNDLTAVR) folds into the Ubiquitin-like; degenerate domain. A PI3K/PI4K catalytic domain is found at 162–459 (GIDPVAVNSG…LIGEKDAESP (298 aa)). Residues 168-174 (VNSGLGG) form a G-loop region. ATP contacts are provided by residues 169-175 (NSGLGGA), Lys190, and 279-282 (QQFI). Positions 312–320 (LNTDRHSGN) are catalytic loop. Residues 339–365 (PIDHGLCLPETLEDPYFEWIHWPQASI) are activation loop. Asp341 provides a ligand contact to ATP. The interval 500–527 (LSKVEETTEDGEEEEEEDREEEENDRAD) is disordered. Residues 506-524 (TTEDGEEEEEEDREEEEND) show a composition bias toward acidic residues. Residue Ser571 is modified to Phosphoserine.

The protein belongs to the PI3/PI4-kinase family. Type II PI4K subfamily. As to quaternary structure, interacts with AHK2.

It catalyses the reaction a 1,2-diacyl-sn-glycero-3-phospho-(1D-myo-inositol) + ATP = a 1,2-diacyl-sn-glycero-3-phospho-(1D-myo-inositol 4-phosphate) + ADP + H(+). Functionally, the phosphorylation of phosphatidylinositol (PI) to PI4P is the first committed step in the generation of phosphatidylinositol 4,5-bisphosphate (PIP2), a precursor of the second messenger inositol 1,4,5-trisphosphate (InsP3). The sequence is that of Phosphatidylinositol 4-kinase gamma 5 (PI4KG5) from Arabidopsis thaliana (Mouse-ear cress).